Consider the following 203-residue polypeptide: NADH-quinone oxidoreductase subunit C (203 aa).

Belongs to the complex I 30 kDa subunit family. As to quaternary structure, NDH-1 is composed of 14 different subunits. Subunits NuoB, C, D, E, F, and G constitute the peripheral sector of the complex.

The protein resides in the cell inner membrane. It carries out the reaction a quinone + NADH + 5 H(+)(in) = a quinol + NAD(+) + 4 H(+)(out). Its function is as follows. NDH-1 shuttles electrons from NADH, via FMN and iron-sulfur (Fe-S) centers, to quinones in the respiratory chain. The immediate electron acceptor for the enzyme in this species is believed to be ubiquinone. Couples the redox reaction to proton translocation (for every two electrons transferred, four hydrogen ions are translocated across the cytoplasmic membrane), and thus conserves the redox energy in a proton gradient. This chain is NADH-quinone oxidoreductase subunit C, found in Bartonella tribocorum (strain CIP 105476 / IBS 506).